Reading from the N-terminus, the 167-residue chain is Cofilin-2 (167 aa).

In terms of domain architecture, ADF-H spans 4-153 (GVTVNDEVIK…KDRCTLADKL (150 aa)). The short motif at 30–34 (KKRKK) is the Nuclear localization signal element.

Belongs to the actin-binding proteins ADF family.

It localises to the nucleus matrix. The protein localises to the cytoplasm. The protein resides in the cytoskeleton. Functionally, controls reversibly actin polymerization and depolymerization in a pH-sensitive manner. It has the ability to bind G- and F-actin in a 1:1 ratio of cofilin to actin. It is the major component of intranuclear and cytoplasmic actin rods. This Xenopus tropicalis (Western clawed frog) protein is Cofilin-2 (cfl2).